Consider the following 1960-residue polypeptide: Myosin-9 (1960 aa).

At alanine 2 the chain carries N-acetylalanine. A mediates interaction with LIMCH1 region spans residues 2-838 (AQQAADKYLY…RLFTKVKPLL (837 aa)). Lysine 8 is modified (N6-acetyllysine). At tyrosine 11 the chain carries Phosphotyrosine. In terms of domain architecture, Myosin N-terminal SH3-like spans 27-77 (AAKKLVWVPSDKSGFEPASLKEEVGEEAIVELVENGKKVKVNKDDIQKMNP). In terms of domain architecture, Myosin motor spans 81–776 (SKVEDMAELT…VLAHLEEERD (696 aa)). Lysine 102 carries the N6-acetyllysine modification. 174–181 (GESGAGKT) lines the ATP pocket. Residues lysine 299, lysine 435, and lysine 613 each carry the N6-acetyllysine modification. Serine 628 bears the Phosphoserine mark. The tract at residues 654-676 (LAKLMATLRNTNPNFVRCIIPNH) is actin-binding. Tyrosine 754 is modified (phosphotyrosine). In terms of domain architecture, IQ spans 779–808 (ITDVIIGFQACCRGYLARKAFAKRQQQLTA). Residues 837 to 1926 (LLQVSRQEEE…LKNKLRRGDL (1090 aa)) are a coiled coil. Lysine 850 carries the post-translational modification N6-succinyllysine. N6-acetyllysine is present on residues lysine 860, lysine 975, and lysine 1024. Position 1114 is a phosphoserine (serine 1114). The tract at residues 1117-1137 (QEDLESERASRNKAEKQKRDL) is disordered. Residues 1122–1137 (SERASRNKAEKQKRDL) are compositionally biased toward basic and acidic residues. N6-acetyllysine occurs at positions 1234, 1249, 1357, 1392, 1404, 1410, 1459, and 1638. The residue at position 1669 (lysine 1669) is an N6-succinyllysine. Serine 1714 carries the post-translational modification Phosphoserine. An N6-acetyllysine mark is found at lysine 1793, lysine 1802, and lysine 1845. Residues 1877–1918 (RQLEEAEEEAQRANASRRKLQRELEDATETADAMNREVSSLK) form a disordered region. Arginine 1923 is subject to Omega-N-methylarginine. Residues 1934-1960 (VARKGAGDCSDEEVDGKADGAEAKAAE) are disordered. Position 1943 is a phosphoserine (serine 1943). Positions 1948-1960 (DGKADGAEAKAAE) are enriched in basic and acidic residues.

It belongs to the TRAFAC class myosin-kinesin ATPase superfamily. Myosin family. In terms of assembly, myosin is a hexameric protein that consists of 2 heavy chain subunits (MHC), 2 alkali light chain subunits (MLC) and 2 regulatory light chain subunits (MLC-2). Interacts with RASIP1. Interacts with DDR1. Interacts with PDLIM2. Interacts with SVIL. Interacts with HTRA3. Interacts with Myo7a. Interacts with CFAP95. Interacts with LIMCH1; independently of the integration of MYH9 into the myosin complex. Interacts with RAB3A. Interacts with ZBED4. Interacts with S100A4; this interaction increases cell motility. ISGylated. In terms of processing, ubiquitination.

It is found in the cytoplasm. It localises to the cytoskeleton. Its subcellular location is the cell cortex. The protein localises to the cytoplasmic vesicle. The protein resides in the secretory vesicle. It is found in the cortical granule. Functionally, cellular myosin that appears to play a role in cytokinesis, cell shape, and specialized functions such as secretion and capping. Required for cortical actin clearance prior to oocyte exocytosis. Promotes cell motility in conjunction with S100A4. During cell spreading, plays an important role in cytoskeleton reorganization, focal contact formation (in the margins but not the central part of spreading cells), and lamellipodial retraction; this function is mechanically antagonized by MYH10. The chain is Myosin-9 (MYH9) from Canis lupus familiaris (Dog).